Here is a 594-residue protein sequence, read N- to C-terminus: RAS guanyl-releasing protein 2-B (594 aa).

The N-terminal Ras-GEF domain occupies 3–121 (SSDLDKGLTI…SLIDIESVPS (119 aa)). Residues 149–382 (DPAELAEHLT…YQLSLQREPR (234 aa)) enclose the Ras-GEF domain. Residues 377 to 403 (LQREPRARSTQTHAKSPPSPSPPLEEW) are disordered. 2 consecutive EF-hand domains span residues 418–453 (HIEK…FPYL) and 455–482 (AFNE…ASSV). Positions 431, 433, 435, 437, 442, 460, 462, 464, 466, and 471 each coordinate Ca(2+). Residues 490–540 (IHNFAERTFLRPVSCQHCRNLILGIYKKGLKCKACGITCHKHCRDHLSIEC) form a Phorbol-ester/DAG-type zinc finger.

This sequence belongs to the RASGRP family.

Its subcellular location is the cytoplasm. It localises to the cytosol. It is found in the cell membrane. The protein localises to the synapse. The protein resides in the synaptosome. Functionally, functions as a calcium- and DAG-regulated nucleotide exchange factor specifically activating Rap through the exchange of bound GDP for GTP. May function in cell aggregation and adhesion. The protein is RAS guanyl-releasing protein 2-B (rasgrp2-b) of Xenopus laevis (African clawed frog).